A 274-amino-acid chain; its full sequence is Oxidoreductase BOA17 (274 aa).

Leucine 14, threonine 32, aspartate 57, asparagine 84, and lysine 117 together coordinate NADP(+). Catalysis depends on proton donor residues serine 135 and tyrosine 149. Residues tyrosine 149, lysine 153, isoleucine 182, and threonine 184 each coordinate NADP(+). Lysine 153 serves as the catalytic Lowers pKa of active site Tyr.

Belongs to the short-chain dehydrogenases/reductases (SDR) family.

The protein operates within polyketide biosynthesis. Oxidoreductase; part of the gene cluster B that mediates the biosynthesis of botcinic acid and its botcinin derivatives, acetate-derived polyketides that contribute to virulence when combined with the sesquiterpene botrydial. Botcinic acid and its derivatives have been shown to induce chlorosis and necrosis during host plant infection, but also have antifungal activities. Two polyketide synthases, BOA6 and BOA9, are involved in the biosynthesis of botcinins. BOA6 mediates the formation of the per-methylated tetraketide core by condensation of four units of malonyl-CoA with one unit of acetyl-CoA, which would be methylated in activated methylene groups to yield a bicyclic acid intermediate that could then either be converted to botrylactone derivatives or lose the starter acetate unit through a retro-Claisen type C-C bond cleavage to yield botcinin derivatives. The second polyketide synthase, BOA9, is probably required for the biosynthesis of the tetraketide side chain of botcinins. The methyltransferase (MT) domain within BOA6 is probably responsible for the incorporation of four methyl groups. The trans-enoyl reductase BOA5 might take over the enoyl reductase function of BOA6 that misses an ER domain. The monooxygenases BOA2, BOA3 and BOA4 might be involved in further hydroxylations at C4, C5 and C8, whereas BOA7, close to BOA9, could potentially be involved in the hydroxylation at C4 in the side chain of botcinins. The polypeptide is Oxidoreductase BOA17 (Botryotinia fuckeliana (strain B05.10) (Noble rot fungus)).